The chain runs to 436 residues: UPF0597 protein YhaM (436 aa).

Belongs to the UPF0597 family.

This is UPF0597 protein YhaM from Salmonella newport (strain SL254).